The sequence spans 162 residues: Large ribosomal subunit protein uL22c (162 aa).

Belongs to the universal ribosomal protein uL22 family. Part of the 50S ribosomal subunit.

The protein resides in the plastid. Its subcellular location is the chloroplast. In terms of biological role, this protein binds specifically to 23S rRNA. Functionally, the globular domain of the protein is located near the polypeptide exit tunnel on the outside of the subunit, while an extended beta-hairpin is found that lines the wall of the exit tunnel in the center of the 70S ribosome. This Cucumis sativus (Cucumber) protein is Large ribosomal subunit protein uL22c (rpl22).